We begin with the raw amino-acid sequence, 2225 residues long: Multifunctional protein pyr1-3 (2225 aa).

Met-1 bears the N-acetylmethionine mark. Residues 40–390 (MVGYNESISD…NVCGEQQHKS (351 aa)) are GATase (Glutamine amidotransferase). The L-glutamine site is built by Ser-51, Gly-245, and Gly-247. The region spanning 196–388 (KVIVLDCGIK…VDNVCGEQQH (193 aa)) is the Glutamine amidotransferase type-1 domain. The active-site Nucleophile; for GATase activity is the Cys-275. L-glutamine is bound by residues Gln-279, Asn-317, Gly-319, and Phe-320. Active-site for GATase activity residues include His-361 and Glu-363. The tract at residues 391–405 (PMNKSKIIDCPKGIN) is linker. The interval 406–948 (KVLILGSGGL…TNDVNINEKS (543 aa)) is CPSase A. Residues 406 to 1461 (KVLILGSGGL…MKGPMPIENV (1056 aa)) form a CPSase (Carbamoyl-phosphate synthase) region. The ATP site is built by Arg-526, Arg-566, Gly-572, Gly-573, Lys-603, Glu-610, Gly-636, Ile-637, His-638, Gln-679, and Glu-693. 2 ATP-grasp domains span residues 530-722 (AEKL…KVAL) and 1069-1260 (SRLL…KIII). Positions 679, 693, and 695 each coordinate Mg(2+). Positions 679, 693, and 695 each coordinate Mn(2+). Residues 949–1461 (YITLGSGSYR…MKGPMPIENV (513 aa)) form a CPSase B region. ATP contacts are provided by Arg-1105, Lys-1144, Ile-1146, Glu-1151, Gly-1176, Val-1177, His-1178, Ser-1179, Gln-1219, and Glu-1231. Residues Gln-1219, Glu-1231, and Asn-1233 each contribute to the Mg(2+) site. 3 residues coordinate Mn(2+): Gln-1219, Glu-1231, and Asn-1233. Positions 1324-1470 (FKAPEKNVLL…VDWRTSNKII (147 aa)) constitute an MGS-like domain. The segment at 1463-1797 (WRTSNKIIRL…VRGKVVKVVL (335 aa)) is DHOase (dihydroorotase). Zn(2+)-binding residues include His-1479 and His-1481. (S)-dihydroorotate-binding residues include Arg-1483 and Asn-1513. Residues Lys-1564, His-1599, Cys-1622, His-1623, and Glu-1646 each coordinate Zn(2+). Lys-1564 carries the post-translational modification N6-carboxylysine. Arg-1670 is a binding site for (S)-dihydroorotate. Position 1695 (Asp-1695) interacts with Zn(2+). The active-site For DHOase activity is the Asp-1695. (S)-dihydroorotate-binding residues include His-1699 and Pro-1711. Positions 1798 to 1916 (RGQIAFIDGK…DTLQTAFNIS (119 aa)) are linker. Residues 1917 to 2225 (DNSLAGKHIF…LLALVFGAGV (309 aa)) are ATCase (Aspartate transcarbamylase). Carbamoyl phosphate contacts are provided by Arg-1974 and Thr-1975. Residue Lys-2002 coordinates L-aspartate. Residues Arg-2023, His-2051, and Gln-2054 each coordinate carbamoyl phosphate. L-aspartate-binding residues include Arg-2084 and Arg-2145. Residues Leu-2184 and Pro-2185 each coordinate carbamoyl phosphate.

In the N-terminal section; belongs to the CarA family. This sequence in the 2nd section; belongs to the CarB family. It in the 3rd section; belongs to the metallo-dependent hydrolases superfamily. DHOase family. CAD subfamily. The protein in the C-terminal section; belongs to the aspartate/ornithine carbamoyltransferase superfamily. ATCase family. As to quaternary structure, homohexamer. Mg(2+) is required as a cofactor. The cofactor is Mn(2+). Zn(2+) serves as cofactor.

The protein localises to the cytoplasm. It catalyses the reaction hydrogencarbonate + L-glutamine + 2 ATP + H2O = carbamoyl phosphate + L-glutamate + 2 ADP + phosphate + 2 H(+). It carries out the reaction L-glutamine + H2O = L-glutamate + NH4(+). The enzyme catalyses hydrogencarbonate + NH4(+) + 2 ATP = carbamoyl phosphate + 2 ADP + phosphate + 2 H(+). The catalysed reaction is carbamoyl phosphate + L-aspartate = N-carbamoyl-L-aspartate + phosphate + H(+). It catalyses the reaction (S)-dihydroorotate + H2O = N-carbamoyl-L-aspartate + H(+). The protein operates within pyrimidine metabolism; UMP biosynthesis via de novo pathway; (S)-dihydroorotate from bicarbonate: step 1/3. Its pathway is pyrimidine metabolism; UMP biosynthesis via de novo pathway; (S)-dihydroorotate from bicarbonate: step 2/3. It functions in the pathway pyrimidine metabolism; UMP biosynthesis via de novo pathway; (S)-dihydroorotate from bicarbonate: step 3/3. With respect to regulation, allosterically regulated and controlled by phosphorylation. 5-phosphoribose 1-diphosphate is an activator while UMP is an inhibitor of the CPSase reaction. Multifunctional protein that encodes the first 3 enzymatic activities of the de novo pyrimidine pathway: carbamoylphosphate synthetase (CPSase; EC 6.3.5.5), aspartate transcarbamylase (ATCase; EC 2.1.3.2) and dihydroorotase (DHOase; EC 3.5.2.3). The CPSase-function is accomplished in 2 steps, by a glutamine-dependent amidotransferase activity (GATase) that binds and cleaves glutamine to produce ammonia, followed by an ammonium-dependent carbamoyl phosphate synthetase, which reacts with the ammonia, hydrogencarbonate and ATP to form carbamoyl phosphate. The endogenously produced carbamoyl phosphate is sequestered and channeled to the ATCase active site. ATCase then catalyzes the formation of carbamoyl-L-aspartate from L-aspartate and carbamoyl phosphate. In the last step, DHOase catalyzes the cyclization of carbamoyl aspartate to dihydroorotate. The chain is Multifunctional protein pyr1-3 (pyr1-3) from Dictyostelium discoideum (Social amoeba).